A 328-amino-acid chain; its full sequence is GMP reductase (328 aa).

Catalysis depends on cysteine 176, which acts as the Thioimidate intermediate. Residue 205 to 228 participates in NADP(+) binding; sequence IIADGGIRTHGDIAKSIRFGASMI.

It belongs to the IMPDH/GMPR family. GuaC type 2 subfamily.

The enzyme catalyses IMP + NH4(+) + NADP(+) = GMP + NADPH + 2 H(+). Catalyzes the irreversible NADPH-dependent deamination of GMP to IMP. It functions in the conversion of nucleobase, nucleoside and nucleotide derivatives of G to A nucleotides, and in maintaining the intracellular balance of A and G nucleotides. The sequence is that of GMP reductase from Streptococcus pneumoniae serotype 19F (strain G54).